A 130-amino-acid chain; its full sequence is Small ribosomal subunit protein uS9 (130 aa).

The segment at 107 to 130 (DSREVERKKVGLRKARRRPQFSKR) is disordered. Basic residues predominate over residues 116–130 (VGLRKARRRPQFSKR).

This sequence belongs to the universal ribosomal protein uS9 family.

The sequence is that of Small ribosomal subunit protein uS9 from Marinomonas sp. (strain MWYL1).